A 514-amino-acid polypeptide reads, in one-letter code: Maturase K (514 aa).

Belongs to the intron maturase 2 family. MatK subfamily.

It localises to the plastid. It is found in the chloroplast. Usually encoded in the trnK tRNA gene intron. Probably assists in splicing its own and other chloroplast group II introns. This Drosophyllum lusitanicum (Portuguese sundew) protein is Maturase K.